The chain runs to 348 residues: MSTSFTMIGGEGPNSYREHSKYQGALVIAAKEKINEAISTKLDIDFTSNLVNIADFGCSSGPNTFTAVQTLIDAVENKYKKESNIEGIEFQVFFNDSSNNDFNTLFKTLPPARLYFASGVPGSFFGRVLPKNSLHVGVSSYSLHFVSKVPKEIKDRDSLVWNKDIHCSGSSKEVVKLYLGQYKIDVGSFLTARAQELVSGGLLLLLGSCRPTGVQMFETVEGMMIDFIGSSLNEIANQGLIDQQKLDTFKLPIYAPNVDELKQIIEDNKCFTIEAFEKISHAKGEYPLDPEYLTSAFKVTVGGSVASLFGQDGMEKTYELVKEKTQEMLPQIAKAKPGMQYLIVLRRN.

S-adenosyl-L-methionine is bound at residue Y16. Substrate contacts are provided by residues Y16 and 19 to 23 (HSKYQ). S-adenosyl-L-methionine is bound by residues G57, 57–58 (GC), N63, 94–97 (FNDS), 123–125 (SFF), and 140–142 (SYS). 141–145 (YSLHF) contacts substrate. Residues N162, D247, and F249 each coordinate Mg(2+).

This sequence belongs to the methyltransferase superfamily. SABATH family. In terms of assembly, homodimer. Mg(2+) is required as a cofactor. Mostly expressed in leaves and, at very low levels, in roots, stems, flowers and siliques.

It carries out the reaction (2E,6E)-farnesoate + S-adenosyl-L-methionine = methyl (2E,6E)-farnesoate + S-adenosyl-L-homocysteine. It catalyses the reaction juvenile hormone III carboxylate + S-adenosyl-L-methionine = juvenile hormone III + S-adenosyl-L-homocysteine. It participates in sesquiterpene biosynthesis. Activated by Mn(2+) ions. Strongly inhibited by Cu(2+), Zn(2+), Fe(3+) and Fe(2+) ions. Moderately inhibited by Na(+) and Ca(2+) ions. Rapidly degraded at temperatures above 40 degrees Celsius. In terms of biological role, may catalyze the production of the insect juvenile hormone methyl farnesoate (MeFA) to trigger defense against insect herbivory. The protein is Farnesoic acid carboxyl-O-methyltransferase of Arabidopsis thaliana (Mouse-ear cress).